Consider the following 270-residue polypeptide: Putative pyruvate, phosphate dikinase regulatory protein 2 (270 aa).

151–158 (GVSRTSKT) contacts ADP.

Belongs to the pyruvate, phosphate/water dikinase regulatory protein family. PDRP subfamily.

The catalysed reaction is N(tele)-phospho-L-histidyl/L-threonyl-[pyruvate, phosphate dikinase] + ADP = N(tele)-phospho-L-histidyl/O-phospho-L-threonyl-[pyruvate, phosphate dikinase] + AMP + H(+). The enzyme catalyses N(tele)-phospho-L-histidyl/O-phospho-L-threonyl-[pyruvate, phosphate dikinase] + phosphate + H(+) = N(tele)-phospho-L-histidyl/L-threonyl-[pyruvate, phosphate dikinase] + diphosphate. In terms of biological role, bifunctional serine/threonine kinase and phosphorylase involved in the regulation of the pyruvate, phosphate dikinase (PPDK) by catalyzing its phosphorylation/dephosphorylation. The polypeptide is Putative pyruvate, phosphate dikinase regulatory protein 2 (Listeria welshimeri serovar 6b (strain ATCC 35897 / DSM 20650 / CCUG 15529 / CIP 8149 / NCTC 11857 / SLCC 5334 / V8)).